The sequence spans 372 residues: Glutamate 5-kinase (372 aa).

Lys-14 contributes to the ATP binding site. Substrate-binding residues include Ser-54, Asp-141, and Asn-153. An ATP-binding site is contributed by 173 to 174 (TD). In terms of domain architecture, PUA spans 280–358 (RGTLVLDDGA…DAIEALLGYV (79 aa)).

Belongs to the glutamate 5-kinase family.

The protein resides in the cytoplasm. The enzyme catalyses L-glutamate + ATP = L-glutamyl 5-phosphate + ADP. It functions in the pathway amino-acid biosynthesis; L-proline biosynthesis; L-glutamate 5-semialdehyde from L-glutamate: step 1/2. Its function is as follows. Catalyzes the transfer of a phosphate group to glutamate to form L-glutamate 5-phosphate. In Pseudomonas aeruginosa (strain UCBPP-PA14), this protein is Glutamate 5-kinase.